The primary structure comprises 364 residues: MSEIIHRSKTRPVRVGNITIGGNNEVVIQSMTTTKTHDVDATVAQIHRLEEAGCQIVRVACPDERAADAIAEIKKRINIPLVVDIHFDYRLALKAIENGADKIRINPGNIGKREKVEAVVKAAKERGVPIRIGVNAGSLEKRILDKYGYPTADGMVESALHHIRILEDLDFQDIIVSLKASDVRLAIEAYEKAARAFDYPLHLGITESGTLFAGTVKSAAGLGAILSKGIGNTVRVSLSADPVEEVKVARELLKAFGLAANAATLISCPTCGRIEIDLISIANEIEEYIAQIKAPIKVAVLGCAVNGPGEAREADIGIAGARGEGLLFRHGKIVRKVPEETMVEELKKEIDKLAEEYASKGKQK.

[4Fe-4S] cluster is bound by residues Cys268, Cys271, Cys303, and Glu310.

Belongs to the IspG family. Requires [4Fe-4S] cluster as cofactor.

It catalyses the reaction (2E)-4-hydroxy-3-methylbut-2-enyl diphosphate + oxidized [flavodoxin] + H2O + 2 H(+) = 2-C-methyl-D-erythritol 2,4-cyclic diphosphate + reduced [flavodoxin]. It participates in isoprenoid biosynthesis; isopentenyl diphosphate biosynthesis via DXP pathway; isopentenyl diphosphate from 1-deoxy-D-xylulose 5-phosphate: step 5/6. Converts 2C-methyl-D-erythritol 2,4-cyclodiphosphate (ME-2,4cPP) into 1-hydroxy-2-methyl-2-(E)-butenyl 4-diphosphate. The sequence is that of 4-hydroxy-3-methylbut-2-en-1-yl diphosphate synthase (flavodoxin) from Anoxybacillus flavithermus (strain DSM 21510 / WK1).